Reading from the N-terminus, the 177-residue chain is Probable nicotinate-nucleotide adenylyltransferase (177 aa).

It belongs to the NadD family.

It catalyses the reaction nicotinate beta-D-ribonucleotide + ATP + H(+) = deamido-NAD(+) + diphosphate. Its pathway is cofactor biosynthesis; NAD(+) biosynthesis; deamido-NAD(+) from nicotinate D-ribonucleotide: step 1/1. Catalyzes the reversible adenylation of nicotinate mononucleotide (NaMN) to nicotinic acid adenine dinucleotide (NaAD). This is Probable nicotinate-nucleotide adenylyltransferase from Nitratiruptor sp. (strain SB155-2).